The chain runs to 241 residues: MSLTLLPAVDVRDGKAVRLRQGESGSETDYGSPFEAARTWVEAGAEWIHLVDLDAAFGTGNNRDQLREIVHELGDRVNIELSGGVRDDASLDAALEAGAARVNIGTAALENPDWTASVIKKYGDRVAVGLDVRGHTLAARGWTREGGDLFETMKFLDSVGCSRYVVTDVAKDGMMSGPNIQLLREVAERTDAKVTASGGISKLDDLRAIKELAEIGVDSAILGKSLYARAFTLQEALAVAK.

Aspartate 10 functions as the Proton acceptor in the catalytic mechanism. The Proton donor role is filled by aspartate 131.

Belongs to the HisA/HisF family.

It is found in the cytoplasm. It carries out the reaction 1-(5-phospho-beta-D-ribosyl)-5-[(5-phospho-beta-D-ribosylamino)methylideneamino]imidazole-4-carboxamide = 5-[(5-phospho-1-deoxy-D-ribulos-1-ylimino)methylamino]-1-(5-phospho-beta-D-ribosyl)imidazole-4-carboxamide. Its pathway is amino-acid biosynthesis; L-histidine biosynthesis; L-histidine from 5-phospho-alpha-D-ribose 1-diphosphate: step 4/9. The chain is 1-(5-phosphoribosyl)-5-[(5-phosphoribosylamino)methylideneamino] imidazole-4-carboxamide isomerase from Bifidobacterium longum subsp. infantis (strain ATCC 15697 / DSM 20088 / JCM 1222 / NCTC 11817 / S12).